Here is a 124-residue protein sequence, read N- to C-terminus: Conotoxin Cl14.12 (124 aa).

Positions 1–17 (MKVAVVLLVSLLAVTYA) are cleaved as a signal peptide. Positions 18–74 (LPEKRIFFGGIVDKVKDTFTKIFNKAKETFDKITDGFDVDFDEVVDKLIAQIHSTPT) are excised as a propeptide.

Contains 2 disulfide bond. As to expression, expressed by the venom duct.

The protein localises to the secreted. This Californiconus californicus (California cone) protein is Conotoxin Cl14.12.